Consider the following 307-residue polypeptide: Pseudouridine-5'-phosphate glycosidase (307 aa).

Catalysis depends on Glu-28, which acts as the Proton donor. Positions 89 and 109 each coordinate substrate. Asp-141 lines the Mn(2+) pocket. Position 143-145 (143-145 (SAD)) interacts with substrate. Lys-162 acts as the Nucleophile in catalysis.

The protein belongs to the pseudouridine-5'-phosphate glycosidase family. In terms of assembly, homotrimer. The cofactor is Mn(2+).

The catalysed reaction is D-ribose 5-phosphate + uracil = psi-UMP + H2O. Functionally, catalyzes the reversible cleavage of pseudouridine 5'-phosphate (PsiMP) to ribose 5-phosphate and uracil. Functions biologically in the cleavage direction, as part of a pseudouridine degradation pathway. The protein is Pseudouridine-5'-phosphate glycosidase of Staphylococcus aureus (strain MW2).